The chain runs to 1419 residues: Myosin-2B (1419 aa).

A Myosin N-terminal SH3-like domain is found at 4–57 (EVGTRCWYPNSEAGWIGCEVTKNDFQDGTYHIELTSETGLVIPIETKHLESNNA). A Myosin motor domain is found at 75–780 (EATHDLTTLS…VLAYLEKIRS (706 aa)). Residue 169 to 176 (GESGAGKT) participates in ATP binding. The actin-binding stretch occupies residues 451-531 (FIGVLDIYGF…LGILSLLDEE (81 aa)). 6 consecutive IQ domains span residues 783–805 (VTELAVLIQKHIRAKYYRSLYLQ), 806–830 (AMLSIKNCQSLIRGVQSRQRVDFEM), 831–854 (KTDAATLLQTLHRSTRVRSQVFET), 855–878 (LKNILEVQTAIRRVLVSNFIQREF), 879–901 (ESRSAIMIQSKIRANSPKHRYQT), and 902–931 (LKTGTILIQALVRRKQSQEKLKQLKIQAES). A coiled-coil region spans residues 909–940 (IQALVRRKQSQEKLKQLKIQAESAASLKNSAA). Residues 1061 to 1419 (KDNERTSTSS…VIKELGSLLA (359 aa)) form a non alpha-helical, tail domain region. Residues 1143–1357 (HSILKQTVQD…LNHLSNTARR (215 aa)) form the Dilute domain.

Belongs to the TRAFAC class myosin-kinesin ATPase superfamily. Myosin family. As to quaternary structure, homodimer. Interacts with calmodulin (CMD1) and the myosin light chain MLC1 through its IQ repeats.

Functionally, myosin heavy chain that is required for the cell cycle-regulated transport of various organelles and proteins for their segregation. Functions by binding with its tail domain to receptor proteins on organelles and exerting force with its N-terminal motor domain against actin filaments, thereby transporting its cargo along polarized actin cables. This chain is Myosin-2B (MYO2B), found in Naumovozyma castellii (Yeast).